A 399-amino-acid polypeptide reads, in one-letter code: Maltose excess protein 1-like, chloroplastic (399 aa).

A chloroplast-targeting transit peptide spans 1–67 (MSSSVSSVRL…RRRRYALPPV (67 aa)). 9 consecutive transmembrane segments (helical) span residues 93-113 (FAGA…ILNA), 123-143 (ALFA…LSLL), 154-174 (AVIV…QLAM), 180-202 (LPQF…LNYF), 217-237 (ITIG…VPFI), 238-258 (PNSL…VVMA), 268-288 (INFV…WMPV), 306-326 (AFTM…AVFI), and 361-381 (FLAT…RDTI).

It is found in the plastid. Its subcellular location is the chloroplast inner membrane. Probable maltose transporter. Essential for the conversion of starch to sucrose in leaves at night, probably via the export of maltose from the chloroplast. The protein is Maltose excess protein 1-like, chloroplastic of Oryza sativa subsp. japonica (Rice).